We begin with the raw amino-acid sequence, 50 residues long: MSKVAALGWGTLVYLGVGLLLAIYPPFVTDKPLGRVCFITAAVCLWLLYV.

Residues 1 to 22 (MSKVAALGWGTLVYLGVGLLLA) form the signal peptide.

This is an uncharacterized protein from Dictyostelium discoideum (Social amoeba).